A 240-amino-acid polypeptide reads, in one-letter code: UDP-2,3-diacylglucosamine hydrolase (240 aa).

The Mn(2+) site is built by aspartate 8, histidine 10, aspartate 41, asparagine 79, and histidine 114. 79–80 (NR) serves as a coordination point for substrate. Residues aspartate 122, serine 160, asparagine 164, lysine 167, and histidine 195 each contribute to the substrate site. 2 residues coordinate Mn(2+): histidine 195 and histidine 197.

The protein belongs to the LpxH family. The cofactor is Mn(2+).

Its subcellular location is the cell inner membrane. The enzyme catalyses UDP-2-N,3-O-bis[(3R)-3-hydroxytetradecanoyl]-alpha-D-glucosamine + H2O = 2-N,3-O-bis[(3R)-3-hydroxytetradecanoyl]-alpha-D-glucosaminyl 1-phosphate + UMP + 2 H(+). Its pathway is glycolipid biosynthesis; lipid IV(A) biosynthesis; lipid IV(A) from (3R)-3-hydroxytetradecanoyl-[acyl-carrier-protein] and UDP-N-acetyl-alpha-D-glucosamine: step 4/6. Hydrolyzes the pyrophosphate bond of UDP-2,3-diacylglucosamine to yield 2,3-diacylglucosamine 1-phosphate (lipid X) and UMP by catalyzing the attack of water at the alpha-P atom. Involved in the biosynthesis of lipid A, a phosphorylated glycolipid that anchors the lipopolysaccharide to the outer membrane of the cell. This is UDP-2,3-diacylglucosamine hydrolase from Yersinia enterocolitica serotype O:8 / biotype 1B (strain NCTC 13174 / 8081).